A 793-amino-acid chain; its full sequence is Probable exo-1,4-beta-xylosidase xlnD (793 aa).

A signal peptide spans 1–20 (MPRVASVAAVLAALLPSALG). N-linked (GlcNAc...) asparagine glycosylation is found at N23, N87, and N142. The active site involves D310. N326, N385, N404, N440, N477, N518, N559, N614, N652, N679, and N701 each carry an N-linked (GlcNAc...) asparagine glycan.

Belongs to the glycosyl hydrolase 3 family.

The protein resides in the secreted. It catalyses the reaction Hydrolysis of (1-&gt;4)-beta-D-xylans, to remove successive D-xylose residues from the non-reducing termini.. Its pathway is glycan degradation; xylan degradation. Functionally, xylan 1,4-beta-xylosidase involved in the hydrolysis of xylan, a major structural heterogeneous polysaccharide found in plant biomass representing the second most abundant polysaccharide in the biosphere, after cellulose. This is Probable exo-1,4-beta-xylosidase xlnD (xlnD) from Aspergillus terreus (strain NIH 2624 / FGSC A1156).